A 559-amino-acid chain; its full sequence is Hepatocyte nuclear factor 1-beta-A (559 aa).

The interval 1 to 35 (MFANMVSKLTSLQQELLSALLDSGVTKDVLLQALE) is dimerization. In terms of domain architecture, HNF-p1 spans 5 to 36 (MVSKLTSLQQELLSALLDSGVTKDVLLQALED). The tract at residues 53-98 (MSPSGSKLSDTDSKPVFHTLTNGHSKGKLSGDEGSEDGDDYDTPPI) is disordered. Residues 85-94 (EGSEDGDDYD) are compositionally biased toward acidic residues. A POU-specific atypical domain is found at 100–195 (KELQSQNTEE…ILRQFNQATQ (96 aa)). A DNA-binding region (homeobox; HNF1-type) is located at residues 240 to 320 (LRRNRFKWGP…NRRKEEAFRQ (81 aa)). 2 stretches are compositionally biased toward low complexity: residues 334-354 (LNSL…SPPS) and 370-381 (TSSTTINHHSSN). The disordered stretch occupies residues 334 to 384 (LNSLLSHSSPHHPQTSSSPPSKMQGVRYSQQGPGEVTSSTTINHHSSNAMS).

Belongs to the HNF1 homeobox family. Binds DNA as a dimer. Can form homodimer or heterodimer with HNF1-alpha. In terms of tissue distribution, during embryonic development, expressed dynamically in the developing hindbrain, kidney (pronephros), gut, liver and pancreas; expressed in both intermediate mesoderm (precursor to the kidney) and the caudal hindbrain (including rhombomeres r5 and r6) at 10 hpf with expression diminishing caudally by 14 hpf. Strongly expressed in adult kidney, gut, liver and swim bladder; weakly expressed in brain, eye, testis, ovary and heart.

The protein localises to the nucleus. Transcription factor that binds to the inverted palindrome 5'-GTTAATNATTAAC-3'. Required for induction of rhombomere r5/r6 gene expression in the hindbrain. This Danio rerio (Zebrafish) protein is Hepatocyte nuclear factor 1-beta-A (hnf1ba).